A 258-amino-acid polypeptide reads, in one-letter code: MTLKARVIPCLDVKDGRVVKGVNFVDLIDAGDPVEAARAYDAAGADELCFLDITASSDNRETIFDVIARTAEQCFMPLTVGGGVRQVSDIRKLLLAGADKVSINTAAVKNPDFVAEAADKFGDQCIVVAIDAKKVSDPGETDRWEIFTHGGRQPTGMDAVEFARKVVDLGAGEILLTSMDRDGTKSGYDISLTRTIADAVRAPVIASGGVGTLDHLVEGIRDGHATAVLAASIFHFGTYSIGEAKRHMAEHGVAMRLD.

Catalysis depends on residues Asp12 and Asp131.

The protein belongs to the HisA/HisF family. Heterodimer of HisH and HisF.

The protein resides in the cytoplasm. It catalyses the reaction 5-[(5-phospho-1-deoxy-D-ribulos-1-ylimino)methylamino]-1-(5-phospho-beta-D-ribosyl)imidazole-4-carboxamide + L-glutamine = D-erythro-1-(imidazol-4-yl)glycerol 3-phosphate + 5-amino-1-(5-phospho-beta-D-ribosyl)imidazole-4-carboxamide + L-glutamate + H(+). Its pathway is amino-acid biosynthesis; L-histidine biosynthesis; L-histidine from 5-phospho-alpha-D-ribose 1-diphosphate: step 5/9. Functionally, IGPS catalyzes the conversion of PRFAR and glutamine to IGP, AICAR and glutamate. The HisF subunit catalyzes the cyclization activity that produces IGP and AICAR from PRFAR using the ammonia provided by the HisH subunit. This is Imidazole glycerol phosphate synthase subunit HisF from Sinorhizobium medicae (strain WSM419) (Ensifer medicae).